Here is a 656-residue protein sequence, read N- to C-terminus: UvrABC system protein B (656 aa).

The Helicase ATP-binding domain occupies 29–414 (KLSEFKTKQQ…SLSQNNVIEQ (386 aa)). 42–49 (GATGTGKT) contacts ATP. Residues 95 to 118 (YFDFYQPEAYLPSKGIYIEKSATV) carry the Beta-hairpin motif. In terms of domain architecture, Helicase C-terminal spans 434-596 (QVEDLIEEII…KTPKTVVKPL (163 aa)). The UVR domain occupies 614-649 (AALIKQLTKEMKKAAANQNYELAIEIRDSIFELEKE).

It belongs to the UvrB family. Forms a heterotetramer with UvrA during the search for lesions. Interacts with UvrC in an incision complex.

The protein resides in the cytoplasm. Functionally, the UvrABC repair system catalyzes the recognition and processing of DNA lesions. A damage recognition complex composed of 2 UvrA and 2 UvrB subunits scans DNA for abnormalities. Upon binding of the UvrA(2)B(2) complex to a putative damaged site, the DNA wraps around one UvrB monomer. DNA wrap is dependent on ATP binding by UvrB and probably causes local melting of the DNA helix, facilitating insertion of UvrB beta-hairpin between the DNA strands. Then UvrB probes one DNA strand for the presence of a lesion. If a lesion is found the UvrA subunits dissociate and the UvrB-DNA preincision complex is formed. This complex is subsequently bound by UvrC and the second UvrB is released. If no lesion is found, the DNA wraps around the other UvrB subunit that will check the other stand for damage. In Mycoplasma genitalium (strain ATCC 33530 / DSM 19775 / NCTC 10195 / G37) (Mycoplasmoides genitalium), this protein is UvrABC system protein B.